Reading from the N-terminus, the 413-residue chain is Protein LAZY 1 (413 aa).

A helical transmembrane segment spans residues 71 to 91 (FTFGGSGLLTIGTLGIAAVAV). The segment covering 103-124 (DADADSDFDDNDDTAGDDEDQV) has biased composition (acidic residues). Disordered regions lie at residues 103-127 (DADA…VDSA) and 261-308 (EDGG…ASAT). Short sequence motifs (nuclear localization signal) lie at residues 275-298 (RKAG…EKVP) and 338-345 (KKSRKRGS).

Belongs to the LAZY family. In terms of tissue distribution, expressed in the node of the stem, initiating leaf founder cells, young leaf primordia, tips of axillary meristems, spikelet pair meristems of developing tassels and ears, male flower primordia, tassels, ears, silks and seeds. Expressed in leaf sheaths, leaf pulvinus and shoot apical meristem (SAM).

The protein resides in the cell membrane. The protein localises to the nucleus. In terms of biological role, involved in the regulation of shoot gravitropism, and tassel and ear development through the regulation of polar auxin transport (PAT) and auxin signaling. Acts as a negative regulator of basipetal PAT, but positive regulator of lateral auxin transport. Involved in the regulation of shoot gravitropism and leaf angle through the regulation of cell development. In Zea mays (Maize), this protein is Protein LAZY 1.